The chain runs to 477 residues: Glutamyl-tRNA(Gln) amidotransferase subunit A (477 aa).

Catalysis depends on charge relay system residues K71 and S146. S170 serves as the catalytic Acyl-ester intermediate.

The protein belongs to the amidase family. GatA subfamily. As to quaternary structure, heterotrimer of A, B and C subunits.

The catalysed reaction is L-glutamyl-tRNA(Gln) + L-glutamine + ATP + H2O = L-glutaminyl-tRNA(Gln) + L-glutamate + ADP + phosphate + H(+). Functionally, allows the formation of correctly charged Gln-tRNA(Gln) through the transamidation of misacylated Glu-tRNA(Gln) in organisms which lack glutaminyl-tRNA synthetase. The reaction takes place in the presence of glutamine and ATP through an activated gamma-phospho-Glu-tRNA(Gln). The sequence is that of Glutamyl-tRNA(Gln) amidotransferase subunit A from Halothermothrix orenii (strain H 168 / OCM 544 / DSM 9562).